The primary structure comprises 513 residues: Mannan endo-1,4-beta-mannosidase A and B (513 aa).

The signal sequence occupies residues 1 to 26 (MKVYKKVAFVMAFIMFFSVLPTISMS). The GH26 domain maps to 41–353 (QTTKNVYSWL…FNDSWVVNRG (313 aa)). His-132 contributes to the substrate binding site. Glu-195 functions as the Proton donor in the catalytic mechanism. Residues Trp-200 and Tyr-270 each contribute to the substrate site. Glu-295 acts as the Nucleophile in catalysis. Substrate is bound at residue 429–430 (IK).

The protein belongs to the glycosyl hydrolase 26 family.

It localises to the secreted. The enzyme catalyses Random hydrolysis of (1-&gt;4)-beta-D-mannosidic linkages in mannans, galactomannans and glucomannans.. In terms of biological role, could be involved in the degradation of glucomannan and catalyzes the endo hydrolysis of beta-1,4-linked mannan, galactomannan and glucomannan. The polypeptide is Mannan endo-1,4-beta-mannosidase A and B (Caldalkalibacillus mannanilyticus (strain DSM 16130 / CIP 109019 / JCM 10596 / AM-001) (Bacillus mannanilyticus)).